The following is a 449-amino-acid chain: Phosphoglucosamine mutase (449 aa).

Ser100 (phosphoserine intermediate) is an active-site residue. Ser100, Asp241, Asp243, and Asp245 together coordinate Mg(2+). Ser100 is modified (phosphoserine).

This sequence belongs to the phosphohexose mutase family. The cofactor is Mg(2+). Activated by phosphorylation.

The catalysed reaction is alpha-D-glucosamine 1-phosphate = D-glucosamine 6-phosphate. Its function is as follows. Catalyzes the conversion of glucosamine-6-phosphate to glucosamine-1-phosphate. In Geobacillus kaustophilus (strain HTA426), this protein is Phosphoglucosamine mutase.